Here is a 422-residue protein sequence, read N- to C-terminus: Tyrosine--tRNA ligase 1 (422 aa).

Tyrosine 36 serves as a coordination point for L-tyrosine. The short motif at 41-50 (PTAGSLHIGH) is the 'HIGH' region element. L-tyrosine contacts are provided by tyrosine 173 and glutamine 177. The short motif at 233-237 (KFGKT) is the 'KMSKS' region element. An ATP-binding site is contributed by lysine 236. One can recognise an S4 RNA-binding domain in the interval 355 to 419 (SDVVTLLLET…GKKQFAMVKL (65 aa)).

Belongs to the class-I aminoacyl-tRNA synthetase family. TyrS type 1 subfamily. In terms of assembly, homodimer.

The protein resides in the cytoplasm. It carries out the reaction tRNA(Tyr) + L-tyrosine + ATP = L-tyrosyl-tRNA(Tyr) + AMP + diphosphate + H(+). Its function is as follows. Catalyzes the attachment of tyrosine to tRNA(Tyr) in a two-step reaction: tyrosine is first activated by ATP to form Tyr-AMP and then transferred to the acceptor end of tRNA(Tyr). The polypeptide is Tyrosine--tRNA ligase 1 (Vibrio vulnificus (strain YJ016)).